We begin with the raw amino-acid sequence, 81 residues long: MARKKAALDFEQSLADLQALVERLENGELSLEDSLTAFEQGVRLTRDCQSALTQAEQKVQVLLERDGELSEEPFDDAELPE.

This sequence belongs to the XseB family. Heterooligomer composed of large and small subunits.

Its subcellular location is the cytoplasm. It catalyses the reaction Exonucleolytic cleavage in either 5'- to 3'- or 3'- to 5'-direction to yield nucleoside 5'-phosphates.. Bidirectionally degrades single-stranded DNA into large acid-insoluble oligonucleotides, which are then degraded further into small acid-soluble oligonucleotides. This Pseudomonas syringae pv. syringae (strain B728a) protein is Exodeoxyribonuclease 7 small subunit.